The following is a 126-amino-acid chain: Protein ApaG (126 aa).

The ApaG domain maps to 2-126 (KQLESSIRIE…FRLAAPGLLH (125 aa)).

This Shewanella loihica (strain ATCC BAA-1088 / PV-4) protein is Protein ApaG.